Consider the following 308-residue polypeptide: Transcriptional adapter 1-1 (308 aa).

Belongs to the TADA1 family. In terms of assembly, component of the Spt-Ada-Gcn5 acetyltransferase (SAGA) complex consisting of wda/Taf5L, Saf6, Taf9, Taf10b, Taf12, Ada1, Spt3, Spt7, Spt20, Sf3b3, Sf3b5, Nipped-A/Tra1, a histone acetyltransferase (HAT) module made up of Gcn5, Ada2b (Isoform B), Ada3 and Sgf29, and a deubiquitinase (DUB) module made up of not/nonstop, Sgf11 and e(y)2 tethered to SAGA by Atxn7. Not a component of the Ada2a-containing ATAC complex.

Its subcellular location is the nucleus. Component of the transcription regulatory complex SAGA, a multiprotein complex that activates transcription by remodeling chromatin and mediating histone acetylation and deubiquitination. The SAGA complex predominantly acetylates histone H3. This is Transcriptional adapter 1-1 from Drosophila melanogaster (Fruit fly).